The sequence spans 107 residues: Flagellar transcriptional regulator FlhD (107 aa).

It belongs to the FlhD family. In terms of assembly, homodimer; disulfide-linked. Forms a heterohexamer composed of two FlhC and four FlhD subunits. Each FlhC binds a FlhD dimer, forming a heterotrimer, and a hexamer assembles by dimerization of two heterotrimers.

It localises to the cytoplasm. In terms of biological role, functions in complex with FlhC as a master transcriptional regulator that regulates transcription of several flagellar and non-flagellar operons by binding to their promoter region. Activates expression of class 2 flagellar genes, including fliA, which is a flagellum-specific sigma factor that turns on the class 3 genes. Also regulates genes whose products function in a variety of physiological pathways. The chain is Flagellar transcriptional regulator FlhD from Bordetella pertussis (strain Tohama I / ATCC BAA-589 / NCTC 13251).